The following is a 339-amino-acid chain: D-erythrose-4-phosphate dehydrogenase (339 aa).

NAD(+) contacts are provided by residues 12 to 13 and arginine 81; that span reads RI. Substrate contacts are provided by residues 154–156, arginine 200, 213–214, and arginine 236; these read SCT and TK. The Nucleophile role is filled by cysteine 155. Asparagine 318 contributes to the NAD(+) binding site.

As to quaternary structure, homotetramer.

The protein resides in the cytoplasm. It catalyses the reaction D-erythrose 4-phosphate + NAD(+) + H2O = 4-phospho-D-erythronate + NADH + 2 H(+). Its pathway is cofactor biosynthesis; pyridoxine 5'-phosphate biosynthesis; pyridoxine 5'-phosphate from D-erythrose 4-phosphate: step 1/5. Functionally, catalyzes the NAD-dependent conversion of D-erythrose 4-phosphate to 4-phosphoerythronate. The polypeptide is D-erythrose-4-phosphate dehydrogenase (epd) (Escherichia coli (strain K12)).